The following is a 229-amino-acid chain: Heptaprenylglyceryl phosphate synthase (229 aa).

Lys-12 contacts sn-glycerol 1-phosphate. Residues Asp-14 and Ser-40 each contribute to the Mg(2+) site. Residues 159–164 (YLEYSG), Gly-189, and 209–210 (GN) contribute to the sn-glycerol 1-phosphate site.

Belongs to the GGGP/HepGP synthase family. Group I subfamily. As to quaternary structure, homodimer. Mg(2+) serves as cofactor.

It carries out the reaction sn-glycerol 1-phosphate + all-trans-heptaprenyl diphosphate = 3-heptaprenyl-sn-glycero-1-phosphate + diphosphate. Its pathway is membrane lipid metabolism; glycerophospholipid metabolism. In terms of biological role, prenyltransferase that catalyzes in vivo the transfer of the heptaprenyl moiety of heptaprenyl pyrophosphate (HepPP; 35 carbon atoms) to the C3 hydroxyl of sn-glycerol-1-phosphate (G1P), producing heptaprenylglyceryl phosphate (HepGP). This reaction is an ether-bond-formation step in the biosynthesis of archaea-type G1P-based membrane lipids found in Bacillales. The polypeptide is Heptaprenylglyceryl phosphate synthase (Bacillus mycoides (strain KBAB4) (Bacillus weihenstephanensis)).